Reading from the N-terminus, the 223-residue chain is Regulator of G-protein signaling 19 (223 aa).

The disordered stretch occupies residues 1–30; the sequence is MPTPPEAEKQQTGPEEADQPPSMSSHDAAP. A compositionally biased stretch (low complexity) spans 20 to 29; the sequence is PPSMSSHDAA. Phosphoserine occurs at positions 24 and 103. Residues 96-212 form the RGS domain; it reads SFDKLMHSPA…LSSPAYRALL (117 aa). Ser-157 bears the Phosphoserine; by MAPK1 and MAPK3 mark. The tract at residues 213–223 is interaction with GIPC; it reads LQGASQSSSEA.

In terms of assembly, interacts with GIPC PDZ domain. Interacts with GNAO1. In terms of processing, fatty acylated. Heavily palmitoylated in the cysteine string motif. Phosphorylated, mainly on serine residues.

It is found in the membrane. Its function is as follows. Inhibits signal transduction by increasing the GTPase activity of G protein alpha subunits thereby driving them into their inactive GDP-bound form. Binds to G-alpha subfamily 1 members, with the order G(i)a3 &gt; G(i)a1 &gt; G(o)a &gt;&gt; G(z)a/G(i)a2. Activity on G(z)-alpha is inhibited by phosphorylation and palmitoylation of the G-protein. The sequence is that of Regulator of G-protein signaling 19 (RGS19) from Bos taurus (Bovine).